The chain runs to 528 residues: Protein MGF 505-7R (528 aa).

ANK repeat units follow at residues 129–158, 261–290, and 292–322; these read ECDL…LLNV, HVNR…VPHK, and IERM…KVKN.

The protein belongs to the asfivirus MGF 505 family. As to quaternary structure, interacts with host STING1. Interacts with host JAK1; this interaction leads to JAK1 degradation. Interacts with host JAK2; this interaction leads to JAK2 degradation. Interacts with host RELA; this interaction inhibits NF-kappa-B promoter activity.

It is found in the host cytoplasm. In terms of biological role, plays a role in virus cell tropism, and may be required for efficient virus replication in macrophages. Interferes with host NF-kappa-B promoter activity mediated by TLR8. Mechanistically, inhibits the phosphorylation and subsequent nuclear translocation of host NF-kappa-B RELA subunit downstream of TLR8. Promotes the expression of the autophagy-related protein host ULK1 to degrade host STING and inhibit the interferon response. Also inhibits JAK1- and JAK2-mediated signaling and thus negatively regulates the IFN-gamma signaling. The chain is Protein MGF 505-7R from Ornithodoros (relapsing fever ticks).